The chain runs to 226 residues: N-acetyltransferase family 8 member 2 (226 aa).

The next 2 helical transmembrane spans lie at 33–55 (FYHV…TIIL) and 60–82 (WLLA…WVSC). The region spanning 69 to 221 (LFLLCLRLIF…FHFTYSLPSV (153 aa)) is the N-acetyltransferase domain. Residue lysine 204 is modified to N6-acetyllysine.

This sequence belongs to the camello family.

Its subcellular location is the membrane. Functionally, probable acetyltransferase. Has no detectable histone acetyltransferase activity towards histone H3 or H4. The polypeptide is N-acetyltransferase family 8 member 2 (Rattus norvegicus (Rat)).